Reading from the N-terminus, the 166-residue chain is Ribosome maturation factor RimP (166 aa).

The protein belongs to the RimP family.

The protein localises to the cytoplasm. Functionally, required for maturation of 30S ribosomal subunits. This chain is Ribosome maturation factor RimP, found in Paramagnetospirillum magneticum (strain ATCC 700264 / AMB-1) (Magnetospirillum magneticum).